Here is a 487-residue protein sequence, read N- to C-terminus: Malonate-semialdehyde dehydrogenase 2 (487 aa).

Residues F154, K178, E181, R182, and S231 each contribute to the NAD(+) site. Residue C286 is the Nucleophile of the active site. E386 lines the NAD(+) pocket.

Belongs to the aldehyde dehydrogenase family. IolA subfamily. In terms of assembly, homotetramer.

The catalysed reaction is 3-oxopropanoate + NAD(+) + CoA + H2O = hydrogencarbonate + acetyl-CoA + NADH + H(+). It catalyses the reaction 2-methyl-3-oxopropanoate + NAD(+) + CoA + H2O = propanoyl-CoA + hydrogencarbonate + NADH + H(+). It functions in the pathway polyol metabolism; myo-inositol degradation into acetyl-CoA; acetyl-CoA from myo-inositol: step 7/7. Its function is as follows. Catalyzes the oxidation of malonate semialdehyde (MSA) and methylmalonate semialdehyde (MMSA) into acetyl-CoA and propanoyl-CoA, respectively. Is involved in a myo-inositol catabolic pathway. Bicarbonate, and not CO2, is the end-product of the enzymatic reaction. The protein is Malonate-semialdehyde dehydrogenase 2 of Bacillus thuringiensis (strain Al Hakam).